Reading from the N-terminus, the 417-residue chain is UDP-N-acetylglucosamine 1-carboxyvinyltransferase (417 aa).

Phosphoenolpyruvate is bound at residue 22–23; it reads KN. Arginine 92 is a UDP-N-acetyl-alpha-D-glucosamine binding site. Cysteine 116 functions as the Proton donor in the catalytic mechanism. Residue cysteine 116 is modified to 2-(S-cysteinyl)pyruvic acid O-phosphothioketal. Aspartate 304 and valine 326 together coordinate UDP-N-acetyl-alpha-D-glucosamine.

It belongs to the EPSP synthase family. MurA subfamily.

It localises to the cytoplasm. It carries out the reaction phosphoenolpyruvate + UDP-N-acetyl-alpha-D-glucosamine = UDP-N-acetyl-3-O-(1-carboxyvinyl)-alpha-D-glucosamine + phosphate. It participates in cell wall biogenesis; peptidoglycan biosynthesis. In terms of biological role, cell wall formation. Adds enolpyruvyl to UDP-N-acetylglucosamine. In Syntrophotalea carbinolica (strain DSM 2380 / NBRC 103641 / GraBd1) (Pelobacter carbinolicus), this protein is UDP-N-acetylglucosamine 1-carboxyvinyltransferase.